Consider the following 407-residue polypeptide: BMP-like protein unc-129 (407 aa).

Positions 1 to 18 (MRRLPIVLLLSVFSIANC) are cleaved as a signal peptide. Asparagine 27, asparagine 42, and asparagine 211 each carry an N-linked (GlcNAc...) asparagine glycan. Residues 252-283 (DDREPIKRKNGKKNSLSEEISSEDVWQGFGEE) are disordered. Asparagine 395 is a glycosylation site (N-linked (GlcNAc...) asparagine).

The protein belongs to the TGF-beta family. Interacts with netrin receptor unc-5; the interaction is direct.

It is found in the secreted. The protein localises to the extracellular space. In terms of biological role, required for the migration of axonal growth-cones and distal tip cells (DTC) along the dorsal-ventral axis of the body wall. Acts cell nonautonomously and independently of the classical daf-4, sma-6 or daf-1 TGFbeta receptor signaling. During axon migration, facilitates long-range repulsive guidance of unc-6/netrin by enhancing unc-5-unc-40 signaling at the expense of unc-5 alone signaling, probably through direct interaction with receptor unc-5. Involved in cell-cell contact formation in sensory rays in the developing male tail, via a pathway involving plx-2 and mab-20/semaphorin-2A. The polypeptide is BMP-like protein unc-129 (Caenorhabditis elegans).